Reading from the N-terminus, the 207-residue chain is Thiamine-phosphate synthase (207 aa).

4-amino-2-methyl-5-(diphosphooxymethyl)pyrimidine-binding positions include 37–41 and asparagine 69; that span reads QYRDK. Residues aspartate 70 and aspartate 89 each coordinate Mg(2+). Residue serine 108 participates in 4-amino-2-methyl-5-(diphosphooxymethyl)pyrimidine binding. 2-[(2R,5Z)-2-carboxy-4-methylthiazol-5(2H)-ylidene]ethyl phosphate is bound at residue 135–137; it reads SRT. Residue lysine 138 coordinates 4-amino-2-methyl-5-(diphosphooxymethyl)pyrimidine. Glycine 164 is a binding site for 2-[(2R,5Z)-2-carboxy-4-methylthiazol-5(2H)-ylidene]ethyl phosphate.

This sequence belongs to the thiamine-phosphate synthase family. The cofactor is Mg(2+).

The enzyme catalyses 2-[(2R,5Z)-2-carboxy-4-methylthiazol-5(2H)-ylidene]ethyl phosphate + 4-amino-2-methyl-5-(diphosphooxymethyl)pyrimidine + 2 H(+) = thiamine phosphate + CO2 + diphosphate. It carries out the reaction 2-(2-carboxy-4-methylthiazol-5-yl)ethyl phosphate + 4-amino-2-methyl-5-(diphosphooxymethyl)pyrimidine + 2 H(+) = thiamine phosphate + CO2 + diphosphate. It catalyses the reaction 4-methyl-5-(2-phosphooxyethyl)-thiazole + 4-amino-2-methyl-5-(diphosphooxymethyl)pyrimidine + H(+) = thiamine phosphate + diphosphate. The protein operates within cofactor biosynthesis; thiamine diphosphate biosynthesis; thiamine phosphate from 4-amino-2-methyl-5-diphosphomethylpyrimidine and 4-methyl-5-(2-phosphoethyl)-thiazole: step 1/1. Condenses 4-methyl-5-(beta-hydroxyethyl)thiazole monophosphate (THZ-P) and 2-methyl-4-amino-5-hydroxymethyl pyrimidine pyrophosphate (HMP-PP) to form thiamine monophosphate (TMP). The sequence is that of Thiamine-phosphate synthase from Chromobacterium violaceum (strain ATCC 12472 / DSM 30191 / JCM 1249 / CCUG 213 / NBRC 12614 / NCIMB 9131 / NCTC 9757 / MK).